The chain runs to 1875 residues: Nonribosomal peptide synthetase otaB (1875 aa).

Residues 202 to 590 (GQVRENGDRA…SIRFAGRRQA (389 aa)) are adenylation 1. A Carrier domain is found at 724-800 (SPMTAAERVM…DLVAHIKDAG (77 aa)). Residue S761 is modified to O-(pantetheine 4'-phosphoryl)serine. Residues 836 to 1245 (EDVYPCTTLQ…LVSPLDEERL (410 aa)) form a condensation region. The tract at residues 1264 to 1659 (QKQSYAQPQA…ARKDTQVKIR (396 aa)) is adenylation 2.

The protein belongs to the NRP synthetase family.

The catalysed reaction is 7-carboxymellein + L-phenylalanine + ATP = ochratoxin B + ADP + phosphate + H(+). Its pathway is mycotoxin biosynthesis. Its function is as follows. Nonribosomal peptide synthetase; part of the gene cluster that mediates the biosynthesis of ochratoxin A (OTA), a mycotoxin composed of a chlorinated type I polyketide dihydroisocoumarin moiety linked to L-phenylalanine, and demonstrated to have nephrotoxic, immunotoxic, genotoxic, neurotoxic, and teratogenic properties. OtaB is responsible for the linking of phenylalanine to the dihydroisocoumarin ring. The pathway begins with the highly reducing polyketide synthase otaA that catalyzes the formation of the isocoumarin group during the initial stages of biosynthesis, starting from one acetate and 4 malonate units, to originate the characteristic pentaketide skeleton 7-methylmellein (7-MM) of the OTA molecule. The newly identified cyclase otaY might be involved in the polyketide cyclization reaction during the initial steps of the OTA biosynthesis. 7-MM is then oxidized into 7-carboxymellein (also called ochratoxin beta) by the cytochrome P450 monooxygenase otaC. The NRPS encoded by the otaB gene is involved in the linking of phenylalanine to the dihydroisocoumarin ring. The reaction catalyzed by NRPS results in the production of ochratoxin B (OTB), which is the non-chlorinated analog of OTA and which subsequently serves as the substrate of the halogenase otaD for chlorination activity to form the final molecular structure of OTA, containing a chlorine atom in the C-5 position of the molecule. In Aspergillus carbonarius (strain ITEM 5010), this protein is Nonribosomal peptide synthetase otaB.